An 894-amino-acid chain; its full sequence is Probable ion channel SYM8 (894 aa).

The disordered stretch occupies residues 1–124; sequence MAKSNEEPNS…PPSLPIAITK (124 aa). Composition is skewed to polar residues over residues 7–16, 24–33, and 44–63; these read EPNSNLNTNK, TLAQQPSLNL, and IGNSSSSSTKTDFEQQQRNY. Helical transmembrane passes span 134–154, 204–224, 267–287, and 319–339; these read SPIFYLFVITCVIFVPYSAFL, TISLYIVLFTLVLPFILYKYI, LALLFATLFLIAFGGLALYAV, and IVSVSISAGGMLIFAMMLGLV. RCK N-terminal domains lie at 360 to 501 and 620 to 769; these read RNHV…ETVV and PEKI…DKSI. Positions 390–415 form a coiled coil; it reads VIVVLAEKEKEEMEMDIAKLEFDFMG.

The protein belongs to the castor/pollux (TC 1.A.1.23) family. In terms of assembly, homotetramer.

The protein localises to the nucleus membrane. Its function is as follows. Required for both rhizobial and mycorrhizal symbiosis. Involved in Nod-factor-induced calcium spiking. May induce a change in membrane polarization that activates the opening of a calcium channel required for calcium spiking. Might be calcium gated. This is Probable ion channel SYM8 (SYM8) from Pisum sativum (Garden pea).